The chain runs to 626 residues: Elongation factor 4 (626 aa).

The region spanning 14 to 195 is the tr-type G domain; that stretch reads SVIRNFCIIA…QIVMDVPAPH (182 aa). GTP-binding positions include 26–31 and 142–145; these read DHGKST and NKID. The disordered stretch occupies residues 603–626; it reads LSTGEDSNDRDTKDKIRAAQKTEG. The span at 609–626 shows a compositional bias: basic and acidic residues; the sequence is SNDRDTKDKIRAAQKTEG.

Belongs to the TRAFAC class translation factor GTPase superfamily. Classic translation factor GTPase family. LepA subfamily.

Its subcellular location is the cell membrane. The enzyme catalyses GTP + H2O = GDP + phosphate + H(+). In terms of biological role, required for accurate and efficient protein synthesis under certain stress conditions. May act as a fidelity factor of the translation reaction, by catalyzing a one-codon backward translocation of tRNAs on improperly translocated ribosomes. Back-translocation proceeds from a post-translocation (POST) complex to a pre-translocation (PRE) complex, thus giving elongation factor G a second chance to translocate the tRNAs correctly. Binds to ribosomes in a GTP-dependent manner. This chain is Elongation factor 4, found in Bifidobacterium longum (strain DJO10A).